The chain runs to 204 residues: Urease accessory protein UreG (204 aa).

12-19 serves as a coordination point for GTP; that stretch reads GPVGSGKT.

The protein belongs to the SIMIBI class G3E GTPase family. UreG subfamily. As to quaternary structure, homodimer. UreD, UreF and UreG form a complex that acts as a GTP-hydrolysis-dependent molecular chaperone, activating the urease apoprotein by helping to assemble the nickel containing metallocenter of UreC. The UreE protein probably delivers the nickel.

The protein localises to the cytoplasm. Its function is as follows. Facilitates the functional incorporation of the urease nickel metallocenter. This process requires GTP hydrolysis, probably effectuated by UreG. The sequence is that of Urease accessory protein UreG from Stutzerimonas stutzeri (strain A1501) (Pseudomonas stutzeri).